The chain runs to 547 residues: CAP-Gly domain-containing linker protein 3 (547 aa).

Positions M1–A49 are disordered. The span at E16–V27 shows a compositional bias: acidic residues. ANK repeat units lie at residues T117 to L155, T160 to V189, and N197 to L226. The 43-residue stretch at G314–S356 folds into the CAP-Gly 1 domain. Residues D365–R413 form a disordered region. Residues P367–T377 are compositionally biased toward low complexity. T374 is subject to Phosphothreonine. The span at G387–T399 shows a compositional bias: basic residues. The span at P400–Q409 shows a compositional bias: polar residues. S401 is subject to Phosphoserine. A CAP-Gly 2 domain is found at G436–P478. Positions S488–S547 are goLD. S-palmitoyl cysteine attachment occurs at residues C534 and C535.

As to quaternary structure, homodimer. Interacts with AKT1 and AKT2; when AKT1 and AKT2 are phosphorylated and activated, affinity is higher for AKT2. Interacts with ZDHHC13 (via ANK repeats). Interacts with ZDHHC17 (via ANK repeats). Palmitoylation by ZDHHC17 regulates association with the plasma membrane.

It localises to the cell membrane. It is found in the cytoplasm. Its subcellular location is the golgi apparatus. The protein resides in the golgi stack. Its function is as follows. Functions as a cytoplasmic linker protein. Involved in TGN-endosome dynamics. May modulate the cellular compartmentalization of AKT kinase family and promote its cell membrane localization, thereby playing a role in glucose transport in adipocytes. This is CAP-Gly domain-containing linker protein 3 (CLIP3) from Pongo abelii (Sumatran orangutan).